Consider the following 182-residue polypeptide: MASELDGLPVIATRREEAEGFLQGLVSKSLGWARKYSLFTYPFVTACCGMEYMTMASARYDSDRFGAAMPRFSPRQADLLMVVGTVNCKQAPILQRIYEQMADPKWVMAFGVCASSGGFYDNYATVQGIDRIIPVDVYVPGCPPRPEQVLDGIMLLQKKIQNQSHKLIDRKPLPVIAGGPGR.

4 residues coordinate [4Fe-4S] cluster: cysteine 47, cysteine 48, cysteine 113, and cysteine 142.

Belongs to the complex I 20 kDa subunit family. As to quaternary structure, NDH-1 is composed of 14 different subunits. Subunits NuoB, C, D, E, F, and G constitute the peripheral sector of the complex. The cofactor is [4Fe-4S] cluster.

The protein localises to the cell inner membrane. The enzyme catalyses a quinone + NADH + 5 H(+)(in) = a quinol + NAD(+) + 4 H(+)(out). Its function is as follows. NDH-1 shuttles electrons from NADH, via FMN and iron-sulfur (Fe-S) centers, to quinones in the respiratory chain. Couples the redox reaction to proton translocation (for every two electrons transferred, four hydrogen ions are translocated across the cytoplasmic membrane), and thus conserves the redox energy in a proton gradient. This is NADH-quinone oxidoreductase subunit B 1 from Anaeromyxobacter dehalogenans (strain 2CP-C).